Consider the following 432-residue polypeptide: MQVSVETTQGLGRRVTITIAADSIETAVKSELVNVAKKVRIDGFRKGKVPMNIVAQRYGASVRQDVLGDLMSRNFIDAIIKEKINPAGAPTYVPGEYKLGEDFTYSVEFEVYPEVELQGLEAIEVEKPIVEVTDADVDGMLDTLRKQQATWKEKDGAVEAEDRVTIDFTGSVDGEEFEGGKASDFVLAMGQGRMIPGFEDGIKGHKAGEEFTIDVTFPEEYHAENLKGKAAKFAINLKKVEERELPELTAEFIKRFGVEDGSVEGLRAEVRKNMERELKSAIRNRVKSQAIEGLVKANDIDVPAALIDSEIDVLRRQAAQRFGGNEKQALELPRELFEEQAKRRVVVGLLLGEVIRTNELKADEERVKGLIEEMASAYEDPKEVIEFYSKNKELMDNMRNVALEEQAVEAVLAKAKVTEKETTFNELMNQQA.

One can recognise a PPIase FKBP-type domain in the interval 161-246 (EDRVTIDFTG…LKKVEERELP (86 aa)).

The protein belongs to the FKBP-type PPIase family. Tig subfamily. In terms of assembly, homodimer and monomer. In vivo most of the ribosomes are in complex with monomeric TF. Uncomplexed TF, however, is in a monomer-dimer equilibrium with approximately two thirds of TF existing in a dimeric state.

It localises to the cytoplasm. The enzyme catalyses [protein]-peptidylproline (omega=180) = [protein]-peptidylproline (omega=0). Functionally, involved in protein export. Acts as a chaperone by maintaining the newly synthesized protein in an open conformation. Functions as a peptidyl-prolyl cis-trans isomerase. The sequence is that of Trigger factor from Escherichia coli O127:H6 (strain E2348/69 / EPEC).